The chain runs to 289 residues: uncharacterized protein (289 aa).

Basic and acidic residues predominate over residues 1 to 20 (MNPMDRQTEGQEPQHQDRQP). Positions 1–39 (MNPMDRQTEGQEPQHQDRQPGIESKMNPLPLSEDEDYRG) are disordered. 49-73 (IITGGDSGIGRAAAIAFAKEGADIS) serves as a coordination point for NADP(+). Position 181 (serine 181) interacts with substrate. Tyrosine 194 (proton acceptor) is an active-site residue.

The protein belongs to the short-chain dehydrogenases/reductases (SDR) family.

This is an uncharacterized protein from Bacillus subtilis (strain 168).